Here is a 363-residue protein sequence, read N- to C-terminus: Uroporphyrinogen decarboxylase (363 aa).

Residues 27–31 (RQAGR), Asp-77, Tyr-157, Thr-212, and His-333 each bind substrate.

This sequence belongs to the uroporphyrinogen decarboxylase family. In terms of assembly, homodimer.

Its subcellular location is the cytoplasm. The catalysed reaction is uroporphyrinogen III + 4 H(+) = coproporphyrinogen III + 4 CO2. It functions in the pathway porphyrin-containing compound metabolism; protoporphyrin-IX biosynthesis; coproporphyrinogen-III from 5-aminolevulinate: step 4/4. Catalyzes the decarboxylation of four acetate groups of uroporphyrinogen-III to yield coproporphyrinogen-III. The protein is Uroporphyrinogen decarboxylase of Cupriavidus necator (strain ATCC 17699 / DSM 428 / KCTC 22496 / NCIMB 10442 / H16 / Stanier 337) (Ralstonia eutropha).